Reading from the N-terminus, the 379-residue chain is Anhydro-N-acetylmuramic acid kinase (379 aa).

Residue 9-16 (GTSADGVD) participates in ATP binding.

The protein belongs to the anhydro-N-acetylmuramic acid kinase family.

The catalysed reaction is 1,6-anhydro-N-acetyl-beta-muramate + ATP + H2O = N-acetyl-D-muramate 6-phosphate + ADP + H(+). The protein operates within amino-sugar metabolism; 1,6-anhydro-N-acetylmuramate degradation. It functions in the pathway cell wall biogenesis; peptidoglycan recycling. Its function is as follows. Catalyzes the specific phosphorylation of 1,6-anhydro-N-acetylmuramic acid (anhMurNAc) with the simultaneous cleavage of the 1,6-anhydro ring, generating MurNAc-6-P. Is required for the utilization of anhMurNAc either imported from the medium or derived from its own cell wall murein, and thus plays a role in cell wall recycling. This is Anhydro-N-acetylmuramic acid kinase from Synechococcus sp. (strain CC9605).